The chain runs to 124 residues: Small ribosomal subunit protein uS12 (124 aa).

Asp-89 carries the 3-methylthioaspartic acid modification.

The protein belongs to the universal ribosomal protein uS12 family. As to quaternary structure, part of the 30S ribosomal subunit. Contacts proteins S8 and S17. May interact with IF1 in the 30S initiation complex.

Its function is as follows. With S4 and S5 plays an important role in translational accuracy. Functionally, interacts with and stabilizes bases of the 16S rRNA that are involved in tRNA selection in the A site and with the mRNA backbone. Located at the interface of the 30S and 50S subunits, it traverses the body of the 30S subunit contacting proteins on the other side and probably holding the rRNA structure together. The combined cluster of proteins S8, S12 and S17 appears to hold together the shoulder and platform of the 30S subunit. This Klebsiella pneumoniae (strain 342) protein is Small ribosomal subunit protein uS12.